A 1925-amino-acid polypeptide reads, in one-letter code: Plexin-D1 (1925 aa).

A compositionally biased stretch (low complexity) spans 1–18 (MAPRAAGGAPLSARAAAA). Positions 1–23 (MAPRAAGGAPLSARAAAASPPPF) are disordered. The N-terminal stretch at 1-46 (MAPRAAGGAPLSARAAAASPPPFQTPPRCPVPLLLLLLLGAARAGA) is a signal peptide. One can recognise a Sema domain in the interval 47–546 (LEIQRRFPSP…TSHQMARVKV (500 aa)). The Extracellular portion of the chain corresponds to 47–1271 (LEIQRRFPSP…TLQLGGSETA (1225 aa)). Asn86 is a glycosylation site (N-linked (GlcNAc...) asparagine). Disulfide bonds link Cys104–Cys114 and Cys140–Cys148. Residues Asn155, Asn188, and Asn224 are each glycosylated (N-linked (GlcNAc...) asparagine). 2 cysteine pairs are disulfide-bonded: Cys322–Cys445 and Cys345–Cys389. Residues Asn481 and Asn500 are each glycosylated (N-linked (GlcNAc...) asparagine). 5 disulfides stabilise this stretch: Cys549/Cys566, Cys555/Cys600, Cys558/Cys575, Cys569/Cys581, and Cys637/Cys661. A glycan (N-linked (GlcNAc...) asparagine) is linked at Asn583. 11 N-linked (GlcNAc...) asparagine glycosylation sites follow: Asn696, Asn736, Asn802, Asn965, Asn1017, Asn1060, Asn1099, Asn1118, Asn1132, Asn1237, and Asn1257. IPT/TIG domains lie at 891–979 (PEIH…FSYV), 981–1066 (PLVH…FWYM), and 1069–1160 (PVIT…LDPE). Residues 1272 to 1292 (IIVSIVICSVLLLLSVVALFV) traverse the membrane as a helical segment. Residues 1293–1925 (FCTKSRRAER…DNIYECYSEA (633 aa)) are Cytoplasmic-facing.

The protein belongs to the plexin family. As to quaternary structure, interacts with NRP1 and SEMA4A. Interacts with SH3BP1; they dissociate upon SEMA3E binding to PLXND1 allowing SH3BP1 to transduce downstream signal through RAC1 inactivation. Detected at low levels in heart, placenta, lung, skeletal muscle, kidney, thymus and liver. Detected at very low levels in brain, colon, spleen, small intestine and peripheral blood leukocytes.

Its subcellular location is the cell membrane. The protein localises to the cell projection. It is found in the lamellipodium membrane. Functionally, cell surface receptor for SEMA4A and for class 3 semaphorins, such as SEMA3A, SEMA3C and SEMA3E. Plays an important role in cell-cell signaling, and in regulating the migration of a wide spectrum of cell types. Regulates the migration of thymocytes in the medulla. Regulates endothelial cell migration. Plays an important role in ensuring the specificity of synapse formation. Required for normal development of the heart and vasculature. Mediates anti-angiogenic signaling in response to SEMA3E. This chain is Plexin-D1 (PLXND1), found in Homo sapiens (Human).